Consider the following 256-residue polypeptide: DNA repair protein RecO (256 aa).

Belongs to the RecO family.

Involved in DNA repair and RecF pathway recombination. In Streptococcus pneumoniae serotype 2 (strain D39 / NCTC 7466), this protein is DNA repair protein RecO.